The chain runs to 527 residues: MLKNILLWSLQLSLLGMSLGGNVLIWPMEGSHWLNVKIIIDELLRKEHNVTVLVASGALFITPSVSPSLTFEIYPVPFGKEKIESVIKDFVLTWLENRPSPSTIWTFYKEMAKVIEEFHLVSRGICDGVLKNEKLMTKLQRGKFEVLLSDPVFPCGDIVALKLGIPFIYSLRFSPASTVEKHCGKVPFPPSYVPAILSELTDQMSFADRVRNFISYRMQDYMFETLWKQWDSYYSKALGRPTTLCETMGKAEIWLMRTYWDFEFPRPYLPNFEFVGGLHCKPAKPLPKEMEEFVQTSGEHGVVVFSLGSMVKNLTEEKANLIASALAQIPQKVLWRYKGKIPATLGSNTRLFDWIPQNDLLGHPKTRAFITHGGTNGIYEAIYHGIPMVGVPMFADQPDNIAHMKAKGAAVEVNMNTMTSADLLSAVRAVINEPFYKENAMRLSRIHHDQPVKPLDRAVFWIEFVMRHKGAKHLRVAAHDLSWFQYHSLDVIGFLLACMASAILLVIKCCLFVFQKIGKTXKKNKRD.

The signal sequence occupies residues 1-20 (MLKNILLWSLQLSLLGMSLG). The Extracellular portion of the chain corresponds to 21 to 490 (GNVLIWPMEG…LSWFQYHSLD (470 aa)). Residue Asn49 is glycosylated (N-linked (GlcNAc...) asparagine). An N6-succinyllysine modification is found at Lys134. Asn313 is a glycosylation site (N-linked (GlcNAc...) asparagine). The helical transmembrane segment at 491-507 (VIGFLLACMASAILLVI) threads the bilayer. Topologically, residues 508 to 527 (KCCLFVFQKIGKTXKKNKRD) are cytoplasmic.

This sequence belongs to the UDP-glycosyltransferase family. In terms of tissue distribution, olfactory epithelium. Mainly found in the sustentacular cells and to a lesser extent in Bowman's gland cells. Also expressed in the olfactory sensory neuron nuclei. Neuronal localization within the olfactory bulb is mainly found in the deeper granular cells.

It is found in the membrane. The catalysed reaction is glucuronate acceptor + UDP-alpha-D-glucuronate = acceptor beta-D-glucuronoside + UDP + H(+). It catalyses the reaction 16beta,17beta-estriol + UDP-alpha-D-glucuronate = 16beta,17beta-estriol 16-O-(beta-D-glucuronate) + UDP + H(+). It carries out the reaction 16alpha,17alpha-estriol + UDP-alpha-D-glucuronate = 16alpha,17alpha-estriol 16-O-(beta-D-glucuronate) + UDP + H(+). The enzyme catalyses 17alpha-estradiol + UDP-alpha-D-glucuronate = 17alpha-estradiol 17-O-(beta-D-glucuronate) + UDP + H(+). The catalysed reaction is 17alpha-estradiol + UDP-alpha-D-glucuronate = 17alpha-estradiol 3-O-(beta-D-glucuronate) + UDP + H(+). It catalyses the reaction 17beta-estradiol + UDP-alpha-D-glucuronate = 17beta-estradiol 3-O-(beta-D-glucuronate) + UDP + H(+). It carries out the reaction 17beta-estradiol + UDP-alpha-D-glucuronate = 17beta-estradiol 17-O-(beta-D-glucuronate) + UDP + H(+). The enzyme catalyses testosterone + UDP-alpha-D-glucuronate = testosterone 17-O-(beta-D-glucuronate) + UDP + H(+). The catalysed reaction is epitestosterone + UDP-alpha-D-glucuronate = epitestosterone 17-O-(beta-D-glucuronate) + UDP + H(+). It catalyses the reaction lithocholate + UDP-alpha-D-glucuronate = lithocholoyl-3-O-(beta-D-glucuronate) + UDP + H(+). It carries out the reaction lithocholate + UDP-alpha-D-glucuronate = lithocholoyl-24-O-(beta-D-glucuronate) + UDP. The enzyme catalyses deoxycholate + UDP-alpha-D-glucuronate = deoxycholoyl-24-O-(beta-D-glucuronate) + UDP. The catalysed reaction is hyodeoxycholate + UDP-alpha-D-glucuronate = hyodeoxycholate 6-O-(beta-D-glucuronate) + UDP + H(+). It catalyses the reaction hyocholate + UDP-alpha-D-glucuronate = hyocholoyl-24-O-(beta-D-glucuronate) + UDP. UDP-glucuronosyltransferase (UGT) that catalyzes phase II biotransformation reactions in which lipophilic substrates are conjugated with glucuronic acid to increase the metabolite's water solubility, thereby facilitating excretion into either the urine or bile. Essential for the elimination and detoxification of drugs, xenobiotics and endogenous compounds. Catalyzes the glucuronidation of endogenous steroid hormones such as androgens (testosterones) and estrogens (estradiol and estriol). Contributes to bile acid (BA) detoxification by catalyzing the glucuronidation of BA substrates, which are natural detergents for dietary lipids absorption. Shows a high affinity to aliphatic odorants such as citronellol as well as olfactory tissue specificity, and therefore may be involved in olfaction. This is UDP-glucuronosyltransferase 2A1 from Rattus norvegicus (Rat).